The following is a 284-amino-acid chain: Digeranylgeranylglyceryl phosphate synthase (284 aa).

Transmembrane regions (helical) follow at residues 10–30, 37–57, 76–98, 102–119, 126–146, 217–237, and 260–280; these read IHNVIGAGLGAFTGYVASSMW, LILAVLVVALVDAGGNAINDV, AVSLRTATSLSYGLMGVGVILSA, YLQFLVALLTSVALIFYA, GIYGNLVVATATALSLFYGGL, LPLFLGYNILYGIVLVPFLYI, and GSAFLGMVAFALGSLPFQFLF.

It belongs to the UbiA prenyltransferase family. DGGGP synthase subfamily. It depends on Mg(2+) as a cofactor.

The protein resides in the cell membrane. The enzyme catalyses sn-3-O-(geranylgeranyl)glycerol 1-phosphate + (2E,6E,10E)-geranylgeranyl diphosphate = 2,3-bis-O-(geranylgeranyl)-sn-glycerol 1-phosphate + diphosphate. It participates in membrane lipid metabolism; glycerophospholipid metabolism. Prenyltransferase that catalyzes the transfer of the geranylgeranyl moiety of geranylgeranyl diphosphate (GGPP) to the C2 hydroxyl of (S)-3-O-geranylgeranylglyceryl phosphate (GGGP). This reaction is the second ether-bond-formation step in the biosynthesis of archaeal membrane lipids. This Metallosphaera sedula (strain ATCC 51363 / DSM 5348 / JCM 9185 / NBRC 15509 / TH2) protein is Digeranylgeranylglyceryl phosphate synthase.